The chain runs to 241 residues: Phosphoribosyl isomerase A (241 aa).

The active-site Proton acceptor is Asp-11. The active-site Proton donor is Asp-130.

Belongs to the HisA/HisF family.

The protein localises to the cytoplasm. The catalysed reaction is 1-(5-phospho-beta-D-ribosyl)-5-[(5-phospho-beta-D-ribosylamino)methylideneamino]imidazole-4-carboxamide = 5-[(5-phospho-1-deoxy-D-ribulos-1-ylimino)methylamino]-1-(5-phospho-beta-D-ribosyl)imidazole-4-carboxamide. The enzyme catalyses N-(5-phospho-beta-D-ribosyl)anthranilate = 1-(2-carboxyphenylamino)-1-deoxy-D-ribulose 5-phosphate. It participates in amino-acid biosynthesis; L-histidine biosynthesis; L-histidine from 5-phospho-alpha-D-ribose 1-diphosphate: step 4/9. Its pathway is amino-acid biosynthesis; L-tryptophan biosynthesis; L-tryptophan from chorismate: step 3/5. Involved in both the histidine and tryptophan biosynthetic pathways. This Streptomyces griseus subsp. griseus (strain JCM 4626 / CBS 651.72 / NBRC 13350 / KCC S-0626 / ISP 5235) protein is Phosphoribosyl isomerase A.